Consider the following 120-residue polypeptide: Transcription elongation factor SPT4 (120 aa).

Residues 1–39 (MSASVPADLRNLRACLLCSLVKSVESFQKEGCENCEDVL) are interaction with spt-5. Residues 15–35 (CLLCSLVKSVESFQKEGCENC) form a C4-type zinc finger.

Belongs to the SPT4 family. In terms of assembly, interacts with spt-5 to form DSIF. DSIF interacts with RNA polymerase II and with the positive transcription elongation factor b complex (P-TEFb complex), which is composed of cdk-9 and cyclin-T (cit-1.1 or cit-1.2).

It localises to the nucleus. Functionally, may function as a component of the DRB sensitivity-inducing factor complex (DSIF complex), which regulates transcription elongation by RNA polymerase II. DSIF may enhance transcriptional pausing at sites proximal to the promoter, which may in turn facilitate the assembly of an elongation competent RNA polymerase II complex. The sequence is that of Transcription elongation factor SPT4 (spt-4) from Caenorhabditis elegans.